The sequence spans 116 residues: U16-barytoxin-Tl1f (116 aa).

An N-terminal signal peptide occupies residues 1–20 (MKTIIVFLSLLVLATKFGDA). Residues 21–74 (NEGVNQEQMKEVIQNEFREDFLNEMAAMSLLQQLEAIESTLLEKEADRNSRQKR) constitute a propeptide that is removed on maturation. 3 disulfide bridges follow: C75–C90, C82–C95, and C89–C110. Residue N85 is glycosylated (N-linked (GlcNAc...) asparagine).

It belongs to the neurotoxin 14 (magi-1) family. 06 (ICK-Trit) subfamily. As to expression, expressed by the venom gland.

It localises to the secreted. Ion channel inhibitor. In Trittame loki (Brush-footed trapdoor spider), this protein is U16-barytoxin-Tl1f.